Consider the following 118-residue polypeptide: Ribonuclease P protein component (118 aa).

Belongs to the RnpA family. Consists of a catalytic RNA component (M1 or rnpB) and a protein subunit.

It catalyses the reaction Endonucleolytic cleavage of RNA, removing 5'-extranucleotides from tRNA precursor.. In terms of biological role, RNaseP catalyzes the removal of the 5'-leader sequence from pre-tRNA to produce the mature 5'-terminus. It can also cleave other RNA substrates such as 4.5S RNA. The protein component plays an auxiliary but essential role in vivo by binding to the 5'-leader sequence and broadening the substrate specificity of the ribozyme. This chain is Ribonuclease P protein component, found in Rickettsia akari (strain Hartford).